The chain runs to 79 residues: Acyl carrier protein (79 aa).

The region spanning 2–77 (SDIEERVKKI…SAIDYVNAHK (76 aa)) is the Carrier domain. O-(pantetheine 4'-phosphoryl)serine is present on serine 37.

This sequence belongs to the acyl carrier protein (ACP) family. In terms of processing, 4'-phosphopantetheine is transferred from CoA to a specific serine of apo-ACP by AcpS. This modification is essential for activity because fatty acids are bound in thioester linkage to the sulfhydryl of the prosthetic group.

Its subcellular location is the cytoplasm. It functions in the pathway lipid metabolism; fatty acid biosynthesis. In terms of biological role, carrier of the growing fatty acid chain in fatty acid biosynthesis. The sequence is that of Acyl carrier protein from Pseudoalteromonas atlantica (strain T6c / ATCC BAA-1087).